A 141-amino-acid chain; its full sequence is VLSAKDKTNISEAWGKIGGHAGEYGAEALERMFFVYPTTKTYFPHFDVSHGSAQVKGHGKKVADALTNAVGHLDDLPGALSALSDLHAHKLRVDPVNFKLLSHCLLVTLANHHPADFTPAVHASLDKFFASVSTVLTSKYR.

The region spanning 1 to 141 (VLSAKDKTNI…VSTVLTSKYR (141 aa)) is the Globin domain. A Phosphoserine modification is found at Ser-3. Lys-7 carries the post-translational modification N6-succinyllysine. Thr-8 carries the post-translational modification Phosphothreonine. Position 16 is an N6-acetyllysine; alternate (Lys-16). At Lys-16 the chain carries N6-succinyllysine; alternate. The residue at position 24 (Tyr-24) is a Phosphotyrosine. At Lys-40 the chain carries N6-succinyllysine. Ser-49 is modified (phosphoserine). His-58 lines the O2 pocket. Heme b is bound at residue His-87. Position 102 is a phosphoserine (Ser-102). Thr-108 is modified (phosphothreonine). Phosphoserine occurs at positions 124 and 131. Residues Thr-134 and Thr-137 each carry the phosphothreonine modification. Ser-138 is modified (phosphoserine).

The protein belongs to the globin family. In terms of assembly, heterotetramer of two alpha chains and two beta chains. Red blood cells.

In terms of biological role, involved in oxygen transport from the lung to the various peripheral tissues. Functionally, hemopressin acts as an antagonist peptide of the cannabinoid receptor CNR1. Hemopressin-binding efficiently blocks cannabinoid receptor CNR1 and subsequent signaling. In Mesocricetus auratus (Golden hamster), this protein is Hemoglobin subunit alpha (HBA).